We begin with the raw amino-acid sequence, 113 residues long: uncharacterized protein (113 aa).

Basic and acidic residues predominate over residues 1-19 (MDKKSAHRNPEDAKAGKYE). Residues 1–94 (MDKKSAHRNP…NKWRGKRKVS (94 aa)) form a disordered region. A compositionally biased stretch (basic residues) spans 20–41 (GKHKRKKKRKQNQNQHRSRHRS). Low complexity predominate over residues 52–66 (FPSSSSSSSGSQTDS). Over residues 75-92 (KIKKKRREKTNKWRGKRK) the composition is skewed to basic residues.

This is an uncharacterized protein from Macaca fascicularis (Crab-eating macaque).